A 720-amino-acid polypeptide reads, in one-letter code: MPRDYQAEKEKCKTFLQEFYKDDELGKKNFKYGVQLANIAHREQVALYIDLDDLAEEDPELVDAICENTRRYTNLFADAVQELLPQYKEREVVHKDALDVYIEHRLMMEQRGRDPSETRDPHNQYPPELMRRFELYFKAPSSSKARVVRDVKADSIGKLVTVRGIVTRVTEVKPMMVVATYTCDQCGAETYQPIQSPTFMPLIMCPSRECQTNRSGGRLYLQTRGSKFIKFQELKIQEHSDQVPVGNIPRCMSVYVRGENTRLAQPGDHVSITGVFLPMLRTGFRQVVQGLLSETYLESHRLVKMNKTEDDELGTEELSEEELRQITEEDFYEKLAASIAPEIYGHEDVKKALLLLLVGGVDNSPRGMKIRGNINICLMGDPGVAKSQLLSYIDRLAPRSQYTTGRGSSGVGLTAAVMKDPVTGEMTLEGGALVLADQGVCCIDEFDKMMDTDRTAIHEVMEQQTISIAKAGIMTTLNARCSILAAANPAYGRYNPKKTVEQNIQLPAALLSRFDLLWLIQDKPDRDNDLRLAQHITYVHQHSKQPPSQFQPLDMKLMRRYITMCKRKQPAIPESLADYLTAAYVEMRKEARTNKDMTFTSARTLLSILRLSTALARLRLEDVVEKEDVNEAMRLTEMSKDSLLGDKGQTSRTQRPADVIFSTIREMVPEKGARSVKYSEAEQRAVSKGFTPAQFEAALEEYEELNVWLVNQARTKITFV.

The C4-type zinc-finger motif lies at Cys183–Cys210. The MCM domain occupies Phe331 to Thr537. Residues Tyr344, Gly383, Ala385, Lys386, Ser387, Asn488, Arg513, and Arg603 each contribute to the ATP site. Residues Ser512–Asp515 carry the Arginine finger motif.

It belongs to the MCM family. As to quaternary structure, component of the mcm2-7 complex (RLF-M). The complex forms a toroidal hexameric ring with the proposed subunit order mcm2-mcm6-mcm4-mcm7-mcm3-mcm5. The heterodimer of mmcm3/mcm5 interacts with mcm4, mmcm6, mcm7 and weakly with mcm2. The N-terminus is required for interaction with mmcm3, though this interaction may not be direct, and remains in a complex with mmcm3 throughout the cell cycle. Begins to associate with zmcm6 at the neurula stage. Component of the replisome complex. Component of the CMG helicase complex, composed of the mcm2-7 complex, the GINS complex and cdc45. In terms of processing, ubiquitinated by traip when forks converge following formation of DNA interstrand cross-links. Short ubiquitin chains on mcm7 promote recruitment of DNA glycosylase neil3. If the interstrand cross-link cannot be cleaved by neil3, the ubiquitin chains continue to grow on mcm7, promoting the unloading of the CMG helicase complex by the vcp/p97 ATPase.

Its subcellular location is the nucleus. The protein resides in the chromosome. The catalysed reaction is ATP + H2O = ADP + phosphate + H(+). Acts as a component of the mcm2-7 complex (mcm complex) which is the putative replicative helicase essential for 'once per cell cycle' DNA replication initiation and elongation in eukaryotic cells. The active ATPase sites in the mcm2-7 ring are formed through the interaction surfaces of two neighboring subunits such that a critical structure of a conserved arginine finger motif is provided in trans relative to the ATP-binding site of the Walker A box of the adjacent subunit. The six ATPase active sites, however, are likely to contribute differentially to the complex helicase activity. The existence of maternal and zygotic forms of mcm3 and mcm6 suggests that specific forms of mcm2-7 complexes may be used during different stages of development. The polypeptide is DNA replication licensing factor mcm7 (Xenopus tropicalis (Western clawed frog)).